Reading from the N-terminus, the 209-residue chain is ATP-dependent Clp protease proteolytic subunit (209 aa).

The Nucleophile role is filled by Ser-101. His-126 is a catalytic residue.

The protein belongs to the peptidase S14 family. As to quaternary structure, component of the chloroplastic Clp protease core complex.

Its subcellular location is the plastid. It is found in the chloroplast stroma. The catalysed reaction is Hydrolysis of proteins to small peptides in the presence of ATP and magnesium. alpha-casein is the usual test substrate. In the absence of ATP, only oligopeptides shorter than five residues are hydrolyzed (such as succinyl-Leu-Tyr-|-NHMec, and Leu-Tyr-Leu-|-Tyr-Trp, in which cleavage of the -Tyr-|-Leu- and -Tyr-|-Trp bonds also occurs).. In terms of biological role, cleaves peptides in various proteins in a process that requires ATP hydrolysis. Has a chymotrypsin-like activity. Plays a major role in the degradation of misfolded proteins. This Huperzia lucidula (Shining clubmoss) protein is ATP-dependent Clp protease proteolytic subunit.